The chain runs to 84 residues: Large ribosomal subunit protein bL27 (84 aa).

The interval 1 to 24 is disordered; sequence MAHKKAGGSSRNGRDSKGQRLGCK.

It belongs to the bacterial ribosomal protein bL27 family.

The chain is Large ribosomal subunit protein bL27 from Pelobacter propionicus (strain DSM 2379 / NBRC 103807 / OttBd1).